The sequence spans 330 residues: Ribosomal RNA small subunit methyltransferase H (330 aa).

S-adenosyl-L-methionine contacts are provided by residues 51-53 (GGH), D70, D118, and Q125. The disordered stretch occupies residues 276 to 330 (STDSTPPGLPVPLPDRQPELRLLTRGAELPTEQETAANPRAASARLRAAERTREP). Low complexity predominate over residues 311-321 (AANPRAASARL).

Belongs to the methyltransferase superfamily. RsmH family.

The protein localises to the cytoplasm. It carries out the reaction cytidine(1402) in 16S rRNA + S-adenosyl-L-methionine = N(4)-methylcytidine(1402) in 16S rRNA + S-adenosyl-L-homocysteine + H(+). Specifically methylates the N4 position of cytidine in position 1402 (C1402) of 16S rRNA. In Thermobifida fusca (strain YX), this protein is Ribosomal RNA small subunit methyltransferase H.